Reading from the N-terminus, the 216-residue chain is Ribonuclease HII (216 aa).

Residues 28 to 216 enclose the RNase H type-2 domain; sequence ACIAGIDEAG…GVKEYVRSEE (189 aa). 3 residues coordinate a divalent metal cation: D34, E35, and D126.

Belongs to the RNase HII family. Mn(2+) is required as a cofactor. It depends on Mg(2+) as a cofactor.

It is found in the cytoplasm. It carries out the reaction Endonucleolytic cleavage to 5'-phosphomonoester.. Its function is as follows. Endonuclease that specifically degrades the RNA of RNA-DNA hybrids. This is Ribonuclease HII from Geotalea uraniireducens (strain Rf4) (Geobacter uraniireducens).